A 414-amino-acid chain; its full sequence is Gamma-glutamyl phosphate reductase (414 aa).

It belongs to the gamma-glutamyl phosphate reductase family.

The protein resides in the cytoplasm. The enzyme catalyses L-glutamate 5-semialdehyde + phosphate + NADP(+) = L-glutamyl 5-phosphate + NADPH + H(+). The protein operates within amino-acid biosynthesis; L-proline biosynthesis; L-glutamate 5-semialdehyde from L-glutamate: step 2/2. Functionally, catalyzes the NADPH-dependent reduction of L-glutamate 5-phosphate into L-glutamate 5-semialdehyde and phosphate. The product spontaneously undergoes cyclization to form 1-pyrroline-5-carboxylate. The polypeptide is Gamma-glutamyl phosphate reductase (Kosmotoga olearia (strain ATCC BAA-1733 / DSM 21960 / TBF 19.5.1)).